The chain runs to 321 residues: Biotin synthase (321 aa).

The region spanning 37 to 264 (RDMELCTLSS…TSVIRLSAGR (228 aa)) is the Radical SAM core domain. 3 residues coordinate [4Fe-4S] cluster: Cys52, Cys56, and Cys59. [2Fe-2S] cluster contacts are provided by Cys96, Cys127, Cys187, and Arg259.

Belongs to the radical SAM superfamily. Biotin synthase family. As to quaternary structure, homodimer. [4Fe-4S] cluster is required as a cofactor. [2Fe-2S] cluster serves as cofactor.

The enzyme catalyses (4R,5S)-dethiobiotin + (sulfur carrier)-SH + 2 reduced [2Fe-2S]-[ferredoxin] + 2 S-adenosyl-L-methionine = (sulfur carrier)-H + biotin + 2 5'-deoxyadenosine + 2 L-methionine + 2 oxidized [2Fe-2S]-[ferredoxin]. The protein operates within cofactor biosynthesis; biotin biosynthesis; biotin from 7,8-diaminononanoate: step 2/2. Catalyzes the conversion of dethiobiotin (DTB) to biotin by the insertion of a sulfur atom into dethiobiotin via a radical-based mechanism. This Coxiella burnetii (strain CbuK_Q154) (Coxiella burnetii (strain Q154)) protein is Biotin synthase.